The primary structure comprises 259 residues: Putative protein-tyrosine sulfotransferase (259 aa).

A disulfide bridge connects residues cysteine 13 and cysteine 68. The Proton donor/acceptor role is filled by glutamate 16. Asparagine 36 is a glycosylation site (N-linked (GlcNAc...) asparagine). 3'-phosphoadenylyl sulfate contacts are provided by arginine 95, serine 103, and arginine 107. A glycan (N-linked (GlcNAc...) asparagine) is linked at asparagine 115. Cysteine 137 and cysteine 144 are joined by a disulfide. 3'-phosphoadenylyl sulfate contacts are provided by residues tyrosine 149 and 194–203 (SASQVKNSIN).

The protein belongs to the protein sulfotransferase family.

It carries out the reaction L-tyrosyl-[protein] + 3'-phosphoadenylyl sulfate = O-sulfo-L-tyrosine-[protein] + adenosine 3',5'-bisphosphate + H(+). Its function is as follows. Catalyzes the O-sulfation of tyrosine residues within acidic motifs of polypeptides, using 3'-phosphoadenylyl sulfate (PAPS) as cosubstrate. The chain is Putative protein-tyrosine sulfotransferase (tpst-2) from Caenorhabditis elegans.